A 654-amino-acid polypeptide reads, in one-letter code: Glutamyl-tRNA(Gln) amidotransferase subunit B, mitochondrial (654 aa).

Residues 1-8 (MGRIPTRE) constitute a mitochondrion transit peptide. The tract at residues 79–101 (DQAKASKAQAKGKKKRSSADNQT) is disordered.

Belongs to the GatB/GatE family. GatB subfamily. Subunit of the heterotrimeric GatCAB amidotransferase (AdT) complex, composed of A, B and C subunits.

The protein resides in the mitochondrion. The catalysed reaction is L-glutamyl-tRNA(Gln) + L-glutamine + ATP + H2O = L-glutaminyl-tRNA(Gln) + L-glutamate + ADP + phosphate + H(+). Its function is as follows. Allows the formation of correctly charged Gln-tRNA(Gln) through the transamidation of misacylated Glu-tRNA(Gln) in the mitochondria. The reaction takes place in the presence of glutamine and ATP through an activated gamma-phospho-Glu-tRNA(Gln). The protein is Glutamyl-tRNA(Gln) amidotransferase subunit B, mitochondrial of Pyricularia oryzae (strain 70-15 / ATCC MYA-4617 / FGSC 8958) (Rice blast fungus).